The following is a 188-amino-acid chain: Viral FLICE protein (188 aa).

DED domains follow at residues 2–74 (ATYE…DLLH) and 93–169 (PYQL…QVQT).

Interacts with host RIPK1, TRAF2, MAP3K14, IKBKB, and IKBKG. Interacts with host CADM1; this interaction is essential for chronic NF-kappa-B activation.

Plays a role in the modulation of host signaling pathways by acting as an activator of both the classic and the alternative NF-kappa-B pathways. Thereby, initiates an important range of cellular processes to promote cell survival, proliferation and protection from apoptosis. This Human herpesvirus 8 type P (isolate GK18) (HHV-8) protein is Viral FLICE protein (ORF71).